The chain runs to 171 residues: 3-hydroxydecanoyl-[acyl-carrier-protein] dehydratase (171 aa).

Residue His70 is part of the active site.

The protein belongs to the thioester dehydratase family. FabA subfamily. In terms of assembly, homodimer.

Its subcellular location is the cytoplasm. The catalysed reaction is a (3R)-hydroxyacyl-[ACP] = a (2E)-enoyl-[ACP] + H2O. The enzyme catalyses (3R)-hydroxydecanoyl-[ACP] = (2E)-decenoyl-[ACP] + H2O. It carries out the reaction (2E)-decenoyl-[ACP] = (3Z)-decenoyl-[ACP]. The protein operates within lipid metabolism; fatty acid biosynthesis. In terms of biological role, necessary for the introduction of cis unsaturation into fatty acids. Catalyzes the dehydration of (3R)-3-hydroxydecanoyl-ACP to E-(2)-decenoyl-ACP and then its isomerization to Z-(3)-decenoyl-ACP. Can catalyze the dehydratase reaction for beta-hydroxyacyl-ACPs with saturated chain lengths up to 16:0, being most active on intermediate chain length. This is 3-hydroxydecanoyl-[acyl-carrier-protein] dehydratase from Shewanella sp. (strain ANA-3).